The chain runs to 692 residues: MMIARFGKQVLRKNVLVSNRIHFPVISRGFHNSFINKSDDLKSPPIDITKGQTEAKVETKKDKFAGFGLDLDELIGETAKGSQVTEQTELTKSEEEEKKKKNINTNTNKNDRKSVPAISLEDFNPSQFKDFKNTGLIDDVILRALDRAHFKDLTPIQQKSIVPLLETERGMVCRAKTGTGKTLTFLIPTLQSAVSRKIASGGRSSGVDTVIIVPTRDLALQIYDEYQKVLRGISGSRKPHISYVIGGMKNSFNPRNPSEIVIATPGRLEADLRSPLFASAFTDIKYRVYDEADRLLDVGFEPTLDSIDRSIKMIRSDDAEPLKSLLFSATVDARLDQFAKQHINKKYDYINTVPEDDPEVHENIHQVMYKCKDAIDKFGSFFNYVNQLVKDSPDMKMMVFLPTQTAVEFLYSYMSEACHKHDVDIDIFHLHGKRSASQRQRALSNFKRDDSGILITTDVAARGIDVKGVTHVVQLFPSSEIADYVHKVGRTGRAGKEGKAVLFITQPEMAYVRRLNSERGVTFEQVHESSEIDNSIDFFEGMRPDEQVANDFFYTLMSFLAQISSTYRLRADDLVAENVSLYRAILQKPDAKLSLRAASALIKRLNRDVVREFFEQGRGGNNGGYGGYGGYGGSSYGRSGGSNRYSGGGGNRSEKRFSFAGRGGNSGGHSGRGRGGRSGYSGGRSSQYSDWE.

A mitochondrion-targeting transit peptide spans 1–37 (MMIARFGKQVLRKNVLVSNRIHFPVISRGFHNSFINK). The tract at residues 82-113 (SQVTEQTELTKSEEEEKKKKNINTNTNKNDRK) is disordered. Residues 89-99 (ELTKSEEEEKK) are compositionally biased toward basic and acidic residues. The Q motif signature appears at 130–158 (DFKNTGLIDDVILRALDRAHFKDLTPIQQ). Positions 162–349 (VPLLETERGM…KQHINKKYDY (188 aa)) constitute a Helicase ATP-binding domain. Residue 175 to 182 (AKTGTGKT) coordinates ATP. The DEAD box motif lies at 290-293 (DEAD). The Helicase C-terminal domain maps to 384-534 (YVNQLVKDSP…QVHESSEIDN (151 aa)). The tract at residues 643 to 692 (NRYSGGGGNRSEKRFSFAGRGGNSGGHSGRGRGGRSGYSGGRSSQYSDWE) is disordered. Over residues 661 to 670 (GRGGNSGGHS) the composition is skewed to gly residues.

It belongs to the DEAD box helicase family. DDX18/HAS1 subfamily.

It localises to the mitochondrion matrix. It carries out the reaction ATP + H2O = ADP + phosphate + H(+). Its function is as follows. ATP-dependent RNA helicase required for mitochondrial splicing of group I and II introns. Also required for efficient mitochondrial translation. The polypeptide is ATP-dependent RNA helicase MSS116, mitochondrial (MSS116) (Lodderomyces elongisporus (strain ATCC 11503 / CBS 2605 / JCM 1781 / NBRC 1676 / NRRL YB-4239) (Yeast)).